Here is a 330-residue protein sequence, read N- to C-terminus: Tryptophan--tRNA ligase (330 aa).

ATP-binding positions include Gln10 to Thr12 and Gly18 to Asn19. A 'HIGH' region motif is present at residues Ala11 to Asn19. Asp134 contacts L-tryptophan. ATP is bound by residues Gly146–Asp148, Ile186, and Lys195–Ser199. The 'KMSKS' region motif lies at Lys195–Ser199.

Belongs to the class-I aminoacyl-tRNA synthetase family. In terms of assembly, homodimer.

The protein resides in the cytoplasm. The catalysed reaction is tRNA(Trp) + L-tryptophan + ATP = L-tryptophyl-tRNA(Trp) + AMP + diphosphate + H(+). Functionally, catalyzes the attachment of tryptophan to tRNA(Trp). The sequence is that of Tryptophan--tRNA ligase from Rickettsia conorii (strain ATCC VR-613 / Malish 7).